The primary structure comprises 288 residues: Protease HtpX (288 aa).

A run of 2 helical transmembrane segments spans residues 4–24 (ILLFLATNFAVLFVFNIILTL) and 33–53 (VGLLIFATLFGFTGSIISLLM). His139 provides a ligand contact to Zn(2+). The active site involves Glu140. Residue His143 participates in Zn(2+) binding. A run of 2 helical transmembrane segments spans residues 146–166 (SGDMVTMTLLQGVLNTFVIFI) and 186–206 (IYFMISMVLELVFGVLASMIA). Glu214 contributes to the Zn(2+) binding site.

This sequence belongs to the peptidase M48B family. The cofactor is Zn(2+).

The protein resides in the cell inner membrane. This Histophilus somni (strain 2336) (Haemophilus somnus) protein is Protease HtpX.